Consider the following 471-residue polypeptide: Metal tolerance protein C1 (471 aa).

Residues 1 to 78 (MGIIRFQILN…PGEEGEKIFR (78 aa)) lie on the Cytoplasmic side of the membrane. The helical transmembrane segment at 79 to 99 (LGLTADIGLSVAKALTGYLCG) threads the bilayer. At 100–101 (ST) the chain is on the vacuolar side. A helical membrane pass occupies residues 102 to 122 (AIIADAAHSVSDVVLSGVALV). The Cytoplasmic segment spans residues 123–144 (SYRAANVPKDKEHPYGHGKFET). A helical transmembrane segment spans residues 145-165 (LGALGISAMLLATGSGIAWHA). The Vacuolar portion of the chain corresponds to 166 to 192 (LDLLSIALSAAPEVIHSGHHHGIDMNH). The helical transmembrane segment at 193–213 (PILALTVTIASISIKEGLYWI) threads the bilayer. Topologically, residues 214–236 (TKRAGEKQGSGLMMANAWHHRSD) are cytoplasmic. The helical transmembrane segment at 237-257 (AISSLVALVGVGGSILGVNFL) threads the bilayer. Residues 258 to 423 (DPLAGLVVST…RITPHLLHSK (166 aa)) lie on the Vacuolar side of the membrane. Residues 424 to 444 (ILLQIVVAMPSTMSIQDVMIA) form a helical membrane-spanning segment. Residues 445–471 (AEHAEKEILKAAPNVARVSIQLSLNSE) are Cytoplasmic-facing.

It belongs to the cation diffusion facilitator (CDF) transporter (TC 2.A.4) family.

It is found in the vacuole membrane. Its function is as follows. Involved in sequestration of excess metal in the cytoplasm into vacuoles to maintain metal homeostasis. The sequence is that of Metal tolerance protein C1 (MTPC1) from Arabidopsis thaliana (Mouse-ear cress).